The sequence spans 629 residues: Flap endonuclease GEN-like 1 (629 aa).

The interval 1–87 (MGVGGSFWDL…DGQPSPLKSQ (87 aa)) is N-domain. The interval 2–98 (GVGGSFWDLL…RAARFFRGSG (97 aa)) is XPG-N domain. Positions 31, 78, 148, 150, 169, 171, and 221 each coordinate Mg(2+). Residues 136-221 (EYLGMPVLRA…VAMALLVGSD (86 aa)) are XPG-I domain. Residues 136-225 (EYLGMPVLRA…LLVGSDHDLH (90 aa)) form an I-domain region. Residues 221–421 (DHDLHGVPGF…MLPMLSTIYL (201 aa)) form a 5'-3' exonuclease domain region. Residues 594–617 (KKGLSGDSGKDGSRKSSDVDLSKN) are disordered. Basic and acidic residues predominate over residues 601 to 614 (SGKDGSRKSSDVDL).

The protein belongs to the XPG/RAD2 endonuclease family. GEN subfamily. Monomer. Interacts with PCNA. PCNA stimulates the nuclease activity without altering cleavage specificity. Mg(2+) serves as cofactor. Highly expressed in anthers. Expressed in roots and leaves.

The protein localises to the nucleus. Its function is as follows. Endonuclease which cleaves flap structures at the junction between single-stranded DNA and double-stranded DNA. Possesses both single-stranded and double-stranded DNA-binding activities. Involved in early microspore development, but does not alter meiosis or tapetal cells development. Possesses Holliday junction (HJ) resolvase activity in vitro. Cleaves HJ at symmetrically related sites of the branch point. The polypeptide is Flap endonuclease GEN-like 1 (Oryza sativa subsp. japonica (Rice)).